A 405-amino-acid chain; its full sequence is Serine--glyoxylate aminotransferase (405 aa).

N6-(pyridoxal phosphate)lysine is present on Lys-196.

Belongs to the class-V pyridoxal-phosphate-dependent aminotransferase family. It depends on pyridoxal 5'-phosphate as a cofactor.

The catalysed reaction is glyoxylate + L-serine = 3-hydroxypyruvate + glycine. The protein operates within one-carbon metabolism; formaldehyde assimilation via serine pathway. The chain is Serine--glyoxylate aminotransferase (sgaA) from Hyphomicrobium methylovorum.